A 122-amino-acid chain; its full sequence is Ribosome-binding factor A (122 aa).

Belongs to the RbfA family. In terms of assembly, monomer. Binds 30S ribosomal subunits, but not 50S ribosomal subunits or 70S ribosomes.

Its subcellular location is the cytoplasm. Functionally, one of several proteins that assist in the late maturation steps of the functional core of the 30S ribosomal subunit. Associates with free 30S ribosomal subunits (but not with 30S subunits that are part of 70S ribosomes or polysomes). Required for efficient processing of 16S rRNA. May interact with the 5'-terminal helix region of 16S rRNA. In Burkholderia mallei (strain NCTC 10229), this protein is Ribosome-binding factor A.